A 305-amino-acid polypeptide reads, in one-letter code: NAD-dependent protein deacylase sirtuin-5, mitochondrial (305 aa).

Residues 1–32 (MIVRQLWCSRGSTSHLCAAVRLNWRSPKMTRP) constitute a mitochondrion transit peptide. The Deacetylase sirtuin-type domain maps to 33–303 (SSDLTAFREH…PPALERHESE (271 aa)). 54-73 (GAGVSAESGVPTFRGPGGFW) is an NAD(+) binding site. 2 residues coordinate substrate: tyrosine 98 and arginine 101. NAD(+) is bound at residue 136–139 (QNID). Residue histidine 154 is the Proton acceptor of the active site. The Zn(2+) site is built by cysteine 162, cysteine 165, cysteine 203, and cysteine 208. Residues 245–247 (GTS), 271–273 (NME), and cysteine 289 each bind NAD(+).

The protein belongs to the sirtuin family. Class III subfamily. It depends on Zn(2+) as a cofactor.

Its subcellular location is the mitochondrion. The protein localises to the cytoplasm. It is found in the cytosol. It localises to the nucleus. The enzyme catalyses N(6)-malonyl-L-lysyl-[protein] + NAD(+) + H2O = 2''-O-malonyl-ADP-D-ribose + nicotinamide + L-lysyl-[protein]. It carries out the reaction N(6)-succinyl-L-lysyl-[protein] + NAD(+) + H2O = 2''-O-succinyl-ADP-D-ribose + nicotinamide + L-lysyl-[protein]. It catalyses the reaction N(6)-glutaryl-L-lysyl-[protein] + NAD(+) + H2O = 2''-O-glutaryl-ADP-D-ribose + nicotinamide + L-lysyl-[protein]. Functionally, NAD-dependent lysine demalonylase, desuccinylase and deglutarylase that specifically removes malonyl, succinyl and glutaryl groups on target proteins. Has weak NAD-dependent protein deacetylase activity; however this activity may not be physiologically relevant in vivo. The chain is NAD-dependent protein deacylase sirtuin-5, mitochondrial (sirt5) from Danio rerio (Zebrafish).